A 479-amino-acid polypeptide reads, in one-letter code: Glutamyl-tRNA reductase (479 aa).

Substrate is bound by residues 49 to 52 (TCNR), serine 109, 114 to 116 (EQQ), and glutamine 120. The active-site Nucleophile is the cysteine 50. 191–196 (GAGSMG) is a binding site for NADP(+).

Belongs to the glutamyl-tRNA reductase family. As to quaternary structure, homodimer.

The enzyme catalyses (S)-4-amino-5-oxopentanoate + tRNA(Glu) + NADP(+) = L-glutamyl-tRNA(Glu) + NADPH + H(+). Its pathway is porphyrin-containing compound metabolism; protoporphyrin-IX biosynthesis; 5-aminolevulinate from L-glutamyl-tRNA(Glu): step 1/2. Catalyzes the NADPH-dependent reduction of glutamyl-tRNA(Glu) to glutamate 1-semialdehyde (GSA). The sequence is that of Glutamyl-tRNA reductase from Rhodococcus jostii (strain RHA1).